A 721-amino-acid polypeptide reads, in one-letter code: Polyribonucleotide nucleotidyltransferase (721 aa).

Mg(2+) is bound by residues aspartate 495 and aspartate 501. Residues 562 to 621 (PRITTIKIRPERIKDIIGPGGKTIKDITARTGTSINIEDDGSVSIASPNQDKVEEAIKMI) enclose the KH domain. Positions 631 to 699 (GRIYMGTVRK…RSGKIRLSRK (69 aa)) constitute an S1 motif domain. Residues 699–721 (KEALADSAKKSEGTEPPKGEPAK) are disordered.

This sequence belongs to the polyribonucleotide nucleotidyltransferase family. Mg(2+) is required as a cofactor.

The protein resides in the cytoplasm. It carries out the reaction RNA(n+1) + phosphate = RNA(n) + a ribonucleoside 5'-diphosphate. In terms of biological role, involved in mRNA degradation. Catalyzes the phosphorolysis of single-stranded polyribonucleotides processively in the 3'- to 5'-direction. This chain is Polyribonucleotide nucleotidyltransferase, found in Anaeromyxobacter dehalogenans (strain 2CP-C).